A 405-amino-acid chain; its full sequence is Argininosuccinate synthase (405 aa).

ATP contacts are provided by residues 10–18 (AYSGGLDTS) and alanine 37. Residues tyrosine 88 and serine 93 each contribute to the L-citrulline site. Residue glycine 118 participates in ATP binding. 3 residues coordinate L-aspartate: threonine 120, asparagine 124, and aspartate 125. Asparagine 124 lines the L-citrulline pocket. L-citrulline is bound by residues arginine 128, serine 177, serine 186, glutamate 263, and tyrosine 275.

It belongs to the argininosuccinate synthase family. Type 1 subfamily. Homotetramer.

Its subcellular location is the cytoplasm. The enzyme catalyses L-citrulline + L-aspartate + ATP = 2-(N(omega)-L-arginino)succinate + AMP + diphosphate + H(+). It functions in the pathway amino-acid biosynthesis; L-arginine biosynthesis; L-arginine from L-ornithine and carbamoyl phosphate: step 2/3. In Acetivibrio thermocellus (strain ATCC 27405 / DSM 1237 / JCM 9322 / NBRC 103400 / NCIMB 10682 / NRRL B-4536 / VPI 7372) (Clostridium thermocellum), this protein is Argininosuccinate synthase.